Here is a 308-residue protein sequence, read N- to C-terminus: Putative ankyrin repeat protein R835 (308 aa).

ANK repeat units lie at residues 100–129 (DINE…NIDL), 152–181 (PMNK…YVDF), 190–217 (SEYT…GANY), 218–247 (KSSY…DLEK), 249–277 (GLRS…EIDY), and 279–305 (YYIY…SKQI).

This Acanthamoeba polyphaga (Amoeba) protein is Putative ankyrin repeat protein R835.